The following is a 342-amino-acid chain: Succinoglycan biosynthesis protein ExoU (342 aa).

This sequence belongs to the glycosyltransferase 2 family.

The protein resides in the cytoplasm. It functions in the pathway glycan metabolism; exopolysaccharide biosynthesis. Glycosyltransferase required for the synthesis of succinoglycan (EPS I). Needed for the addition of the sixth sugar (glucose), catalyzes the formation of a beta-1,6 linkage between the fifth and sixth sugar. The polypeptide is Succinoglycan biosynthesis protein ExoU (exoU) (Rhizobium meliloti (strain 1021) (Ensifer meliloti)).